The primary structure comprises 1091 residues: Protein JSN1 (1091 aa).

Disordered regions lie at residues 31 to 51 (EYENNGESNSQLQQQPQKLGS) and 75 to 131 (HHSK…GSLT). Over residues 99–111 (TVASKTPRASPSR) the composition is skewed to polar residues. The residue at position 129 (serine 129) is a Phosphoserine. Phosphothreonine is present on threonine 131. Residues serine 160 and serine 168 each carry the phosphoserine modification. The region spanning 340 to 426 (NTISISNVFP…APSKISFAKI (87 aa)) is the RRM domain. 2 stretches are compositionally biased toward low complexity: residues 482–494 (QQSQQSQHQNHSS) and 507–520 (NNNNSMHGNNNNSA). Disordered regions lie at residues 482–534 (QQSQ…PPPN) and 568–591 (HKGTSDTQNFGPLPEPLSGREFDP). A PUM-HD domain is found at 557 to 913 (QINSLIKKSL…RLLEEVGLAS (357 aa)). The segment covering 568 to 577 (HKGTSDTQNF) has biased composition (polar residues). Pumilio repeat units lie at residues 617–652 (AMLDELPELSSDYLGNTIVQKLFEHSSDIIKDIMLR), 653–689 (KTSKYLTSMGVHKNGTWACQKMITMAHTPRQIMQVTQ), 690–724 (GVKDYCTPLINDQFGNYVIQCVLKFGFPWNQFIFE), 725–760 (SIIANFWVIVQNRYGARAVRACLEAHDIVTPEQSIV), and 801–837 (RLTKRIVELCGHRLASLTILKVLNYRGDDNARKIILD). Residues 911–981 (LASPSSTHNK…GSSASTLSPG (71 aa)) are disordered. A Phosphoserine modification is found at serine 913. 2 stretches are compositionally biased toward low complexity: residues 915 to 935 (SSTHNKTKQQQQQHHNSSISH) and 951 to 979 (SVSSVKSGGSKHTTMNTTTTNGSSASTLS).

The polypeptide is Protein JSN1 (JSN1) (Saccharomyces cerevisiae (strain ATCC 204508 / S288c) (Baker's yeast)).